The chain runs to 486 residues: Glutamyl-tRNA(Gln) amidotransferase subunit A (486 aa).

Active-site charge relay system residues include Lys-74 and Ser-149. Ser-173 serves as the catalytic Acyl-ester intermediate.

The protein belongs to the amidase family. GatA subfamily. In terms of assembly, heterotrimer of A, B and C subunits.

It carries out the reaction L-glutamyl-tRNA(Gln) + L-glutamine + ATP + H2O = L-glutaminyl-tRNA(Gln) + L-glutamate + ADP + phosphate + H(+). In terms of biological role, allows the formation of correctly charged Gln-tRNA(Gln) through the transamidation of misacylated Glu-tRNA(Gln) in organisms which lack glutaminyl-tRNA synthetase. The reaction takes place in the presence of glutamine and ATP through an activated gamma-phospho-Glu-tRNA(Gln). This Prochlorococcus marinus (strain NATL2A) protein is Glutamyl-tRNA(Gln) amidotransferase subunit A.